The following is a 238-amino-acid chain: Metal-independent phosphoserine phosphatase (238 aa).

Catalysis depends on H32, which acts as the Tele-phosphohistidine intermediate. Catalysis depends on E107, which acts as the Proton donor/acceptor.

The protein belongs to the phosphoglycerate mutase family.

The catalysed reaction is O-phospho-L-serine + H2O = L-serine + phosphate. It carries out the reaction O-phospho-D-serine + H2O = D-serine + phosphate. Functionally, phosphoglycerate mutase-like protein lacking PGM activity, but having a low metal-independent phosphoserine phosphatase activity in vitro. May be involved in serine biosynthesis. This Arabidopsis thaliana (Mouse-ear cress) protein is Metal-independent phosphoserine phosphatase (IPSP).